The following is a 606-amino-acid chain: Aspartate--tRNA(Asp/Asn) ligase (606 aa).

L-aspartate is bound at residue Glu177. An aspartate region spans residues 201–204 (QLFK). Position 223 (Arg223) interacts with L-aspartate. ATP is bound by residues 223 to 225 (RDE) and Gln232. Residue His461 coordinates L-aspartate. Glu499 lines the ATP pocket. An L-aspartate-binding site is contributed by Arg506. 551 to 554 (GMDR) is a binding site for ATP.

Belongs to the class-II aminoacyl-tRNA synthetase family. Type 1 subfamily. Homodimer.

It localises to the cytoplasm. It catalyses the reaction tRNA(Asx) + L-aspartate + ATP = L-aspartyl-tRNA(Asx) + AMP + diphosphate. Functionally, aspartyl-tRNA synthetase with relaxed tRNA specificity since it is able to aspartylate not only its cognate tRNA(Asp) but also tRNA(Asn). Reaction proceeds in two steps: L-aspartate is first activated by ATP to form Asp-AMP and then transferred to the acceptor end of tRNA(Asp/Asn). In Prochlorococcus marinus (strain MIT 9313), this protein is Aspartate--tRNA(Asp/Asn) ligase.